The primary structure comprises 1025 residues: DNA ligase 4 (1025 aa).

The interval 1–36 (MMQPTPAPSSAPGSPQRTQAEPEMETPSYPQPPQNV) is disordered. ATP is bound by residues glutamate 289, lysine 291, leucine 292, arginine 296, glutamate 349, phenylalanine 387, glutamate 447, lysine 452, lysine 469, and lysine 471. Residue lysine 291 is the N6-AMP-lysine intermediate of the active site. Position 349 (glutamate 349) interacts with Mg(2+). Residue glutamate 447 coordinates Mg(2+). A BRCT 1 domain is found at 667 to 763 (VKTDIFNGMK…EPAPFKKKYF (97 aa)). The disordered stretch occupies residues 773 to 904 (ADEYNEDDGE…TTPDVDGDVK (132 aa)). Composition is skewed to acidic residues over residues 775 to 785 (EYNEDDGEEEG) and 806 to 816 (SETEDEDEEQA). Basic and acidic residues predominate over residues 817–838 (PEIKEEQDGELHEWLKVDDRKS). Positions 845–870 (DEEDSVTEDDSDNADVADEEEPDLDD) are enriched in acidic residues. Basic and acidic residues predominate over residues 891–904 (RHRETTPDVDGDVK). Residues 915–1025 (DPDVIFKHLC…TLLDEEGESF (111 aa)) form the BRCT 2 domain.

Belongs to the ATP-dependent DNA ligase family. Mg(2+) serves as cofactor.

Its subcellular location is the nucleus. The enzyme catalyses ATP + (deoxyribonucleotide)n-3'-hydroxyl + 5'-phospho-(deoxyribonucleotide)m = (deoxyribonucleotide)n+m + AMP + diphosphate.. Its function is as follows. DNA ligase involved in DNA non-homologous end joining (NHEJ); required for double-strand break (DSB) repair. The polypeptide is DNA ligase 4 (LIG4) (Coprinopsis cinerea (strain Okayama-7 / 130 / ATCC MYA-4618 / FGSC 9003) (Inky cap fungus)).